We begin with the raw amino-acid sequence, 419 residues long: D-mannonate dehydratase (419 aa).

The substrate site is built by N54 and H139. The Proton donor/acceptor role is filled by Y176. D227 is a Mg(2+) binding site. Catalysis depends on H229, which acts as the Proton donor/acceptor. Residues E253 and E279 each coordinate Mg(2+). Residues E279, R300, H329, D333, and E356 each contribute to the substrate site.

Belongs to the mandelate racemase/muconate lactonizing enzyme family. GalD subfamily. Mg(2+) serves as cofactor.

The catalysed reaction is D-mannonate = 2-dehydro-3-deoxy-D-gluconate + H2O. Its pathway is carbohydrate metabolism; pentose and glucuronate interconversion. Its function is as follows. Catalyzes the dehydration of D-mannonate. Has no detectable activity with a panel of 70 other acid sugars (in vitro). The sequence is that of D-mannonate dehydratase from Xanthomonas oryzae pv. oryzicola (strain BLS256).